We begin with the raw amino-acid sequence, 159 residues long: Protransforming growth factor alpha (159 aa).

The signal sequence occupies residues 1 to 23 (MVPAAGQLALLALGILVAVCQAL). The propeptide at 24–38 (ENSTSPLSDSPVAAA) is removed in mature form. Residues 24-97 (ENSTSPLSDS…AVVAASQKKQ (74 aa)) are Extracellular-facing. Asparagine 25 is a glycosylation site (N-linked (GlcNAc...) asparagine). In terms of domain architecture, EGF-like spans 42-82 (HFNKCPDSHTQYCFHGTCRFLVQEEKPACVCHSGYVGVRCE). 3 cysteine pairs are disulfide-bonded: cysteine 46/cysteine 59, cysteine 54/cysteine 70, and cysteine 72/cysteine 81. Positions 89–159 (VVAASQKKQA…TACCHSETVV (71 aa)) are cleaved as a propeptide — removed in mature form. Residues 98 to 123 (AITALVVVSIVALAVLIITCVLIHCC) traverse the membrane as a helical segment. The Cytoplasmic portion of the chain corresponds to 124–159 (QVRKHCEWCRALVCRHEKPSALLKGRTACCHSETVV). 2 S-palmitoyl cysteine lipidation sites follow: cysteine 152 and cysteine 153.

Interacts with the PDZ domains of MAGI3, SDCBP and SNTA1. The interaction with SDCBP, is required for the targeting to the cell surface. In the endoplasmic reticulum, in its immature form (i.e. with a prosegment and lacking full N-glycosylation), interacts with CNIH. In the Golgi apparatus, may form a complex with CNIH and GORASP2. Interacts (via cytoplasmic C-terminal domain) with NKD2.

Its subcellular location is the secreted. The protein resides in the extracellular space. The protein localises to the cell membrane. Functionally, TGF alpha is a mitogenic polypeptide that is able to bind to the EGF receptor/EGFR and to act synergistically with TGF beta to promote anchorage-independent cell proliferation in soft agar. The chain is Protransforming growth factor alpha (Tgfa) from Rattus norvegicus (Rat).